The primary structure comprises 156 residues: uncharacterized protein (156 aa).

Positions 1–12 (MSARPSLPPLPA) are enriched in pro residues. 2 disordered regions span residues 1 to 89 (MSAR…PPPA) and 129 to 156 (PLSP…TMRD). Positions 49–67 (ARAEEAGGEEGKREAEAWT) are enriched in basic and acidic residues.

This is an uncharacterized protein from Homo sapiens (Human).